Here is a 154-residue protein sequence, read N- to C-terminus: 6,7-dimethyl-8-ribityllumazine synthase (154 aa).

5-amino-6-(D-ribitylamino)uracil is bound by residues Trp-22, Ala-56–Glu-58, and Cys-80–Ile-82. Residue Asp-85 to Thr-86 coordinates (2S)-2-hydroxy-3-oxobutyl phosphate. The active-site Proton donor is the His-88. Residue Asn-113 participates in 5-amino-6-(D-ribitylamino)uracil binding. Position 127 (Arg-127) interacts with (2S)-2-hydroxy-3-oxobutyl phosphate.

It belongs to the DMRL synthase family. In terms of assembly, forms an icosahedral capsid composed of 60 subunits, arranged as a dodecamer of pentamers.

It carries out the reaction (2S)-2-hydroxy-3-oxobutyl phosphate + 5-amino-6-(D-ribitylamino)uracil = 6,7-dimethyl-8-(1-D-ribityl)lumazine + phosphate + 2 H2O + H(+). The protein operates within cofactor biosynthesis; riboflavin biosynthesis; riboflavin from 2-hydroxy-3-oxobutyl phosphate and 5-amino-6-(D-ribitylamino)uracil: step 1/2. Its function is as follows. Catalyzes the formation of 6,7-dimethyl-8-ribityllumazine by condensation of 5-amino-6-(D-ribitylamino)uracil with 3,4-dihydroxy-2-butanone 4-phosphate. This is the penultimate step in the biosynthesis of riboflavin. This is 6,7-dimethyl-8-ribityllumazine synthase from Xanthomonas campestris pv. campestris (strain 8004).